The primary structure comprises 387 residues: Sorting nexin-7 (387 aa).

A PX domain is found at 30–151; that stretch reads KDLFITVDEP…IFLTAQAWEL (122 aa). The a 1,2-diacyl-sn-glycero-3-phospho-(1D-myo-inositol-3-phosphate) site is built by Arg-73, Gln-75, Lys-103, and Arg-117. One can recognise a BAR domain in the interval 178–387; it reads GVKNRPEEFM…HLEETSEDKP (210 aa).

This sequence belongs to the sorting nexin family. Heterodimer; heterodimerizes with SNX4.

The protein resides in the early endosome membrane. Functionally, involved in the regulation of endocytosis and in several stages of intracellular trafficking. Together with SNX4, involved in autophagosome assembly by regulating trafficking and recycling of phospholipid scramblase ATG9A. In Macaca fascicularis (Crab-eating macaque), this protein is Sorting nexin-7 (SNX7).